A 197-amino-acid chain; its full sequence is HTH-type transcriptional regulator BetI (197 aa).

In terms of domain architecture, HTH tetR-type spans proline 8–leucine 68. A DNA-binding region (H-T-H motif) is located at residues serine 31 to phenylalanine 50.

It participates in amine and polyamine biosynthesis; betaine biosynthesis via choline pathway [regulation]. In terms of biological role, repressor involved in the biosynthesis of the osmoprotectant glycine betaine. It represses transcription of the choline transporter BetT and the genes of BetAB involved in the synthesis of glycine betaine. The sequence is that of HTH-type transcriptional regulator BetI from Pseudomonas fluorescens (strain Pf0-1).